Consider the following 124-residue polypeptide: RNA polymerase-binding protein RbpA (124 aa).

Zn(2+) contacts are provided by cysteine 34, histidine 38, cysteine 56, and cysteine 59. The segment at 73 to 124 is sufficient for interaction with HrdB (SigA); the sequence is EKKAKPARTHWDMLMERRTREELEEVLEERLAVLRSGAMNIAVHPRDSRKSA.

It belongs to the RNA polymerase-binding protein RbpA family. Homodimer. Forms a complex with the RNAP, and a complex with RNAP plus principal sigma factor HrdB associated with promoter. Binds to free principal sigma factors HrdB and HrdA, probably via the sigma-2 domain, but not to 6 other sigma factors tested. Zn(2+) serves as cofactor.

Its function is as follows. Binds to RNA polymerase (RNAP), stimulating transcription from principal, but not alternative sigma factor promoters. Stimulates transcription from several principal sigma factor HrdB (SigA)-dependent promoters but not from a SigR-dependent promoter. Stimulation occurs in the presence of the transcription initiation inhibitor rifampicin (Rif). The sequence is that of RNA polymerase-binding protein RbpA from Streptomyces coelicolor (strain ATCC BAA-471 / A3(2) / M145).